A 391-amino-acid polypeptide reads, in one-letter code: MTNNIKTITLNLGPQHPATHGVLRLILEMDGEVVNNTDPHIGLLHRGTEKLIEHKTYLQAIPYFDRLDYVSPMCQEHAFALAVESLLKCEVPRRAQFIRVLFSELTRILNHTLNIGSQALDIGATTPLLWLFEEREKIMEFYERVSGSRMHSNYFRPGGVAEDLPDGLLEDIDKFIEQFHPKLQDVESLLNENRLWKQRLVDIGVVLQQEAMEWGFSGPMLRGSGIAWDLRKSNPYDVYDEIDFEVPIGKNGDCYDRYLVRILEMYESIKIIKQCIEKMPKGAVKTNDPKLTPPTRAKMKESMEAMIHHFKLYTEGYEVPAGETYKAVEAPKGEFGVYLYSIGNNQPYRCRIKTPGFAHLQGLNFMSKGHLMADVITIIATLDIVFGEIDR.

The protein belongs to the complex I 49 kDa subunit family. NDH-1 is composed of 14 different subunits. Subunits NuoB, C, D, E, F, and G constitute the peripheral sector of the complex.

The protein localises to the cell inner membrane. The enzyme catalyses a quinone + NADH + 5 H(+)(in) = a quinol + NAD(+) + 4 H(+)(out). Functionally, NDH-1 shuttles electrons from NADH, via FMN and iron-sulfur (Fe-S) centers, to quinones in the respiratory chain. The immediate electron acceptor for the enzyme in this species is believed to be ubiquinone. Couples the redox reaction to proton translocation (for every two electrons transferred, four hydrogen ions are translocated across the cytoplasmic membrane), and thus conserves the redox energy in a proton gradient. In Rickettsia canadensis (strain McKiel), this protein is NADH-quinone oxidoreductase subunit D.